The sequence spans 357 residues: Adenylate isopentenyltransferase 1, chloroplastic (357 aa).

Residues 1 to 71 (MTELNFHLLP…NRKDKVVVIL (71 aa)) constitute a chloroplast transit peptide. The segment covering 20–39 (TTTSPSFSSHSSSSSSLLSF) has biased composition (low complexity). Residues 20 to 58 (TTTSPSFSSHSSSSSSLLSFTKRRRKHQPLVSSIRMEQS) form a disordered region. 72-79 (GATGAGKS) contacts ATP.

It belongs to the IPP transferase family. As to expression, expressed in the vascular stele of the roots, in the xylem precursor cell files in the root tip, in leaf axils, ovules, and immature seeds.

The protein resides in the plastid. Its subcellular location is the chloroplast. The enzyme catalyses dimethylallyl diphosphate + AMP = N(6)-(dimethylallyl)adenosine 5'-phosphate + diphosphate. It catalyses the reaction dimethylallyl diphosphate + ADP = N(6)-(dimethylallyl)adenosine 5'-diphosphate + diphosphate. The catalysed reaction is dimethylallyl diphosphate + ATP = N(6)-(dimethylallyl)adenosine 5'-triphosphate + diphosphate. Involved in cytokinin biosynthesis. Catalyzes the transfer of an isopentenyl group from dimethylallyl diphosphate (DMAPP) to ATP, ADP and AMP. Adenine, adenosine, isopentenylpyrophosphate and 1-hydroxy-2-methyl-2-(E)-butenyl 4-diphosphate (HMBDP) are not used as substrates. The chain is Adenylate isopentenyltransferase 1, chloroplastic (IPT1) from Arabidopsis thaliana (Mouse-ear cress).